We begin with the raw amino-acid sequence, 166 residues long: SUMO-conjugating enzyme UBC9 (166 aa).

The UBC core domain occupies 4 to 157 (IAAGRLAEER…VKKEAVKYAA (154 aa)). The active-site Glycyl thioester intermediate is the cysteine 93.

This sequence belongs to the ubiquitin-conjugating enzyme family. Interacts with brd-1 and rad-51. Interacts with smo-1 and sop-2. Interacts with bet-1 (via BROMO domain 2). Interacts with isoforms 1 and 2 of X-box-binding protein xbp-1.

It is found in the nucleus envelope. The protein operates within protein modification; protein sumoylation. Its function is as follows. Accepts the ubiquitin-like protein smo-1 from the aos-1-uba-2 E1 complex and catalyzes its covalent attachment to other proteins with the help of an E3 ligase such as gei-17. Required to sumoylate the ETS transcription factor lin-1, Polycomb protein sop-2, and intermediate filament proteins, such as ifb-1. Required for embryonic development, fertility, vulval morphogenesis, inhibition of vulval cell fates, lifespan, and neuromuscular activity. The protein is SUMO-conjugating enzyme UBC9 of Caenorhabditis elegans.